Reading from the N-terminus, the 61-residue chain is Metallothionein-2A (61 aa).

M1 carries the post-translational modification N-acetylmethionine. The beta stretch occupies residues 1–29; it reads MDPNCSCAAGGSCTCAGSCKCKDCKCTSC. The a divalent metal cation site is built by C5, C7, C13, C15, C19, C21, C24, C26, C29, C33, C34, C36, C37, C41, C44, C48, C50, and C57. The tract at residues 30-61 is alpha; it reads KKSCCSCCPVGCAKCAQGCICKGASDKCSCCA. Position 58 is a phosphoserine (S58). A divalent metal cation-binding residues include C59 and C60.

This sequence belongs to the metallothionein superfamily. Type 1 family. As to quaternary structure, interacts with EOLA1.

Functionally, metallothioneins have a high content of cysteine residues that bind various heavy metals; these proteins are transcriptionally regulated by both heavy metals and glucocorticoids. The polypeptide is Metallothionein-2A (MT2A) (Sus scrofa (Pig)).